A 322-amino-acid chain; its full sequence is Putative integrase ORF3 (322 aa).

Residues 153 to 322 (RGKLTDFKSI…SSKEMFLQNI (170 aa)) form the Integrase catalytic domain.

This sequence belongs to the plectrovirus integrase ORF3 family.

Its function is as follows. This protein may encode an integrase, which is necessary for integration of the viral DNA into host genome. The polypeptide is Putative integrase ORF3 (Spiroplasma virus SpV1-R8A2 B (SpV1)).